An 82-amino-acid polypeptide reads, in one-letter code: Large ribosomal subunit protein bL27 (82 aa).

The tract at residues 1–20 is disordered; the sequence is MATKKAGGSSSNGRDSIGKR.

The protein belongs to the bacterial ribosomal protein bL27 family.

The chain is Large ribosomal subunit protein bL27 from Neorickettsia sennetsu (strain ATCC VR-367 / Miyayama) (Ehrlichia sennetsu).